Here is a 248-residue protein sequence, read N- to C-terminus: Ubiquinone/menaquinone biosynthesis C-methyltransferase UbiE (248 aa).

S-adenosyl-L-methionine-binding positions include S68, D92, and 120–121; that span reads NA.

The protein belongs to the class I-like SAM-binding methyltransferase superfamily. MenG/UbiE family.

It catalyses the reaction a 2-demethylmenaquinol + S-adenosyl-L-methionine = a menaquinol + S-adenosyl-L-homocysteine + H(+). The catalysed reaction is a 2-methoxy-6-(all-trans-polyprenyl)benzene-1,4-diol + S-adenosyl-L-methionine = a 5-methoxy-2-methyl-3-(all-trans-polyprenyl)benzene-1,4-diol + S-adenosyl-L-homocysteine + H(+). It participates in quinol/quinone metabolism; menaquinone biosynthesis; menaquinol from 1,4-dihydroxy-2-naphthoate: step 2/2. Its pathway is cofactor biosynthesis; ubiquinone biosynthesis. Functionally, methyltransferase required for the conversion of demethylmenaquinol (DMKH2) to menaquinol (MKH2) and the conversion of 2-polyprenyl-6-methoxy-1,4-benzoquinol (DDMQH2) to 2-polyprenyl-3-methyl-6-methoxy-1,4-benzoquinol (DMQH2). In Rickettsia typhi (strain ATCC VR-144 / Wilmington), this protein is Ubiquinone/menaquinone biosynthesis C-methyltransferase UbiE.